The sequence spans 717 residues: RNA helicase NPH-II (717 aa).

The 192-residue stretch at 193 to 384 (FEIFISKKNC…IYFKNIVEIY (192 aa)) folds into the Helicase ATP-binding domain. 206-213 (GGTGIGKT) contributes to the ATP binding site. The DEXH box motif lies at 331 to 334 (DEIH). Residues 406–566 (ILKNYMPSVG…VFKYNNMDYY (161 aa)) enclose the Helicase C-terminal domain.

The protein belongs to the DEAD box helicase family. DEAH subfamily. As to quaternary structure, monomer.

Its subcellular location is the virion. The catalysed reaction is ATP + H2O = ADP + phosphate + H(+). Its function is as follows. NTP-dependent helicase that catalyzes unidirectional unwinding of 3'tailed duplex RNAs and plays an important role during transcription of early mRNAs, presumably by preventing R-loop formation behind the elongating RNA polymerase. Might also play a role in the export of newly synthesized mRNA chains out of the core into the cytoplasm. Required for replication and propagation of viral particles. This chain is RNA helicase NPH-II (NPH2), found in Melanoplus sanguinipes (Migratory grasshopper).